The following is a 273-amino-acid chain: Transmembrane protein 202 (273 aa).

4 helical membrane-spanning segments follow: residues 53–75 (HIYI…IAMS), 121–141 (FFLI…SSWI), 155–175 (VSML…LFVA), and 189–209 (LLWT…AGII). The interval 242–273 (TTVSPAKDEGPRSEMESLSVREKNLPKSGLWW) is disordered. Over residues 247 to 266 (AKDEGPRSEMESLSVREKNL) the composition is skewed to basic and acidic residues.

The protein localises to the membrane. The sequence is that of Transmembrane protein 202 (TMEM202) from Homo sapiens (Human).